We begin with the raw amino-acid sequence, 1162 residues long: Carbamoyl phosphate synthase large chain (1162 aa).

The carboxyphosphate synthetic domain stretch occupies residues 1 to 456; it reads MPKRTDIKSI…SLQKALRGLE (456 aa). Arg129, Arg222, Gly228, Gly229, Glu261, Val263, Glu268, Gly294, Val295, His296, Gln338, and Glu352 together coordinate ATP. The 196-residue stretch at 186–381 folds into the ATP-grasp 1 domain; that stretch reads ETEWQLGEVE…IAKVAAKLAV (196 aa). Positions 338, 352, and 354 each coordinate Mg(2+). Positions 338, 352, and 354 each coordinate Mn(2+). Residues 457-613 are oligomerization domain; the sequence is TGLTGFDEIA…PFVGQPRSEA (157 aa). Residues 614–1025 are carbamoyl phosphate synthetic domain; sequence EVSDRKKVVI…AFAKAQLGAG (412 aa). In terms of domain architecture, ATP-grasp 2 spans 742–954; the sequence is QKLLIKLDLN…IAKVAARIMA (213 aa). ATP is bound by residues Arg778, Thr838, Leu840, Glu845, Gly870, Ile871, His872, Ser873, Gln913, and Glu925. Mg(2+) contacts are provided by Gln913, Glu925, and Asn927. Mn(2+) is bound by residues Gln913, Glu925, and Asn927. Residues 1026–1162 form the MGS-like domain; that stretch reads VELPREGTVF…VRPLQDYFRS (137 aa). Positions 1026–1162 are allosteric domain; that stretch reads VELPREGTVF…VRPLQDYFRS (137 aa).

The protein belongs to the CarB family. As to quaternary structure, composed of two chains; the small (or glutamine) chain promotes the hydrolysis of glutamine to ammonia, which is used by the large (or ammonia) chain to synthesize carbamoyl phosphate. Tetramer of heterodimers (alpha,beta)4. Requires Mg(2+) as cofactor. Mn(2+) serves as cofactor.

The enzyme catalyses hydrogencarbonate + L-glutamine + 2 ATP + H2O = carbamoyl phosphate + L-glutamate + 2 ADP + phosphate + 2 H(+). It catalyses the reaction hydrogencarbonate + NH4(+) + 2 ATP = carbamoyl phosphate + 2 ADP + phosphate + 2 H(+). The protein operates within amino-acid biosynthesis; L-arginine biosynthesis; carbamoyl phosphate from bicarbonate: step 1/1. Its pathway is pyrimidine metabolism; UMP biosynthesis via de novo pathway; (S)-dihydroorotate from bicarbonate: step 1/3. Its function is as follows. Large subunit of the glutamine-dependent carbamoyl phosphate synthetase (CPSase). CPSase catalyzes the formation of carbamoyl phosphate from the ammonia moiety of glutamine, carbonate, and phosphate donated by ATP, constituting the first step of 2 biosynthetic pathways, one leading to arginine and/or urea and the other to pyrimidine nucleotides. The large subunit (synthetase) binds the substrates ammonia (free or transferred from glutamine from the small subunit), hydrogencarbonate and ATP and carries out an ATP-coupled ligase reaction, activating hydrogencarbonate by forming carboxy phosphate which reacts with ammonia to form carbamoyl phosphate. The chain is Carbamoyl phosphate synthase large chain from Brucella suis biovar 1 (strain 1330).